The chain runs to 290 residues: Transposon Ty3-G Gag polyprotein (290 aa).

N-acetylserine is present on Ser2. The segment at 265–282 (RLCFYCKKEGHRLNECRA) adopts a CCHC-type zinc-finger fold.

The protein resides in the cytoplasm. Its function is as follows. Capsid protein (CA) is the structural component of the virus-like particle (VLP), forming the shell that encapsulates the retrotransposons dimeric RNA genome. Functionally, nucleocapsid protein p9 (NC) forms the nucleocore that coats the retro-elements dimeric RNA. Binds these RNAs through its zinc fingers. Promotes primer tRNA(i)-Met annealing to the multipartite primer-binding site (PBS), dimerization of Ty3 RNA and initiation of reverse transcription. In Saccharomyces cerevisiae (strain ATCC 204508 / S288c) (Baker's yeast), this protein is Transposon Ty3-G Gag polyprotein (TY3A-G).